We begin with the raw amino-acid sequence, 176 residues long: MNKSDSLLSKDLFLLYQEFSEIRKIKQDTVFQSRRFKLVQDIKIKKNMYEQDIHYHYLSCQKFQISFNHDSIFYLRNKNYFDVLKKLKIGKYVPEIILDVHGLNQDQAKRKLGELLNICHKENLFCASVIHGHGRNILKNKIPIWLSRHPSVIAFYKIPKKFGRSTAILFLIHSSD.

The 76-residue stretch at 98–173 (LDVHGLNQDQ…RSTAILFLIH (76 aa)) folds into the Smr domain.

Belongs to the SmrB family. As to quaternary structure, associates with collided ribosomes, but not with correctly translating polysomes.

Functionally, acts as a ribosome collision sensor. Detects stalled/collided disomes (pairs of ribosomes where the leading ribosome is stalled and a second ribosome has collided with it) and endonucleolytically cleaves mRNA at the 5' boundary of the stalled ribosome. Stalled/collided disomes form a new interface (primarily via the 30S subunits) that binds SmrB. Cleaved mRNA becomes available for tmRNA ligation, leading to ribosomal subunit dissociation and rescue of stalled ribosomes. The polypeptide is Ribosome rescue factor SmrB (Buchnera aphidicola subsp. Baizongia pistaciae (strain Bp)).